Reading from the N-terminus, the 310-residue chain is p-hydroxybenzoic acid efflux pump subunit AaeA (310 aa).

A helical transmembrane segment spans residues Ala-12–Tyr-32.

It belongs to the membrane fusion protein (MFP) (TC 8.A.1) family.

It is found in the cell inner membrane. In terms of biological role, forms an efflux pump with AaeB. This chain is p-hydroxybenzoic acid efflux pump subunit AaeA, found in Klebsiella pneumoniae (strain 342).